We begin with the raw amino-acid sequence, 244 residues long: ATP synthase subunit a (244 aa).

The next 5 helical transmembrane spans lie at 17-37, 75-95, 112-132, 170-190, and 221-241; these read LTNI…AILT, FLAL…LGLP, DPAI…YYGV, LYGN…LATS, and GAIQ…HKIS.

It belongs to the ATPase A chain family. As to quaternary structure, F-type ATPases have 2 components, CF(1) - the catalytic core - and CF(0) - the membrane proton channel. CF(1) has five subunits: alpha(3), beta(3), gamma(1), delta(1), epsilon(1). CF(0) has three main subunits: a(1), b(2) and c(9-12). The alpha and beta chains form an alternating ring which encloses part of the gamma chain. CF(1) is attached to CF(0) by a central stalk formed by the gamma and epsilon chains, while a peripheral stalk is formed by the delta and b chains. The F(1)F(0) complex interacts with SpoIIIJ and YqjG; YqgA is found in the same complex.

It is found in the cell membrane. Functionally, key component of the proton channel; it plays a direct role in the translocation of protons across the membrane. This is ATP synthase subunit a from Bacillus subtilis (strain 168).